The chain runs to 245 residues: 2,3,4,5-tetrahydropyridine-2,6-dicarboxylate N-acetyltransferase (245 aa).

Belongs to the transferase hexapeptide repeat family. DapH subfamily.

The enzyme catalyses (S)-2,3,4,5-tetrahydrodipicolinate + acetyl-CoA + H2O = L-2-acetamido-6-oxoheptanedioate + CoA. It participates in amino-acid biosynthesis; L-lysine biosynthesis via DAP pathway; LL-2,6-diaminopimelate from (S)-tetrahydrodipicolinate (acetylase route): step 1/3. Its function is as follows. Catalyzes the transfer of an acetyl group from acetyl-CoA to tetrahydrodipicolinate. The protein is 2,3,4,5-tetrahydropyridine-2,6-dicarboxylate N-acetyltransferase of Methanopyrus kandleri (strain AV19 / DSM 6324 / JCM 9639 / NBRC 100938).